A 440-amino-acid chain; its full sequence is Thymidine phosphorylase (440 aa).

Belongs to the thymidine/pyrimidine-nucleoside phosphorylase family. As to quaternary structure, homodimer.

The enzyme catalyses thymidine + phosphate = 2-deoxy-alpha-D-ribose 1-phosphate + thymine. It functions in the pathway pyrimidine metabolism; dTMP biosynthesis via salvage pathway; dTMP from thymine: step 1/2. The enzymes which catalyze the reversible phosphorolysis of pyrimidine nucleosides are involved in the degradation of these compounds and in their utilization as carbon and energy sources, or in the rescue of pyrimidine bases for nucleotide synthesis. The polypeptide is Thymidine phosphorylase (Escherichia coli O127:H6 (strain E2348/69 / EPEC)).